The following is a 344-amino-acid chain: MLILGVESSCDETGIALYDSEAGLLSHALYSQVAMHAEYGGVVPELASRDHIRRVVPLLREALGQAGKMLDEVDAVAYTRGPGLAGALLVGCAFAEALALAIDKPTIPVHHLEGHLLSPLLSSDPPTFPFVALLVSGGHTQLMKVTGVGEYELLGETLDDAAGEAFDKSAKLLGLPYPGGALLSKLAEQGTPGVHELPRPMLHSGDLSFSFSGLKTAVLTLVREHADAMSDEFKANAARAFQEAIVEVLVKKSLKAMKQTGLKQLVVAGGVGANKQLRTTLNDEAKRKRFRVYYPELEFCTDNGAMIALAGCLRLQSGSPSKAAGSFAVQPRWPLMEMSVSPTK.

Fe cation-binding residues include His111 and His115. Substrate-binding positions include 134–138 (LVSGG), Asp167, Gly180, and Asn274. A Fe cation-binding site is contributed by Asp302.

Belongs to the KAE1 / TsaD family. Requires Fe(2+) as cofactor.

The protein localises to the cytoplasm. The catalysed reaction is L-threonylcarbamoyladenylate + adenosine(37) in tRNA = N(6)-L-threonylcarbamoyladenosine(37) in tRNA + AMP + H(+). Required for the formation of a threonylcarbamoyl group on adenosine at position 37 (t(6)A37) in tRNAs that read codons beginning with adenine. Is involved in the transfer of the threonylcarbamoyl moiety of threonylcarbamoyl-AMP (TC-AMP) to the N6 group of A37, together with TsaE and TsaB. TsaD likely plays a direct catalytic role in this reaction. The polypeptide is tRNA N6-adenosine threonylcarbamoyltransferase (Dechloromonas aromatica (strain RCB)).